The sequence spans 520 residues: Cytochrome P450 monooxygenase 176 (520 aa).

The N-linked (GlcNAc...) asparagine glycan is linked to Asn6. Residues 10–27 form a helical membrane-spanning segment; sequence LLVVAGALFLTFLTTRFI. 2 N-linked (GlcNAc...) asparagine glycosylation sites follow: Asn141 and Asn270. Cys445 is a binding site for heme. Asn517 carries N-linked (GlcNAc...) asparagine glycosylation.

Belongs to the cytochrome P450 family. Heme is required as a cofactor.

The protein resides in the membrane. The protein operates within secondary metabolite biosynthesis. Its function is as follows. Cytochrome P450 monooxygenase that is able to use delta(6)-protoilludene as a substrate to produce delta(6)-protoilludene-5-ol and an unidentified hydroxyprotoilludene. Is also able to use phenanthrene as a substrate for oxidation. This Postia placenta (strain ATCC 44394 / Madison 698-R) (Brown rot fungus) protein is Cytochrome P450 monooxygenase 176.